The following is a 577-amino-acid chain: Proline--tRNA ligase (577 aa).

This sequence belongs to the class-II aminoacyl-tRNA synthetase family. ProS type 1 subfamily. As to quaternary structure, homodimer.

The protein localises to the cytoplasm. It catalyses the reaction tRNA(Pro) + L-proline + ATP = L-prolyl-tRNA(Pro) + AMP + diphosphate. Its function is as follows. Catalyzes the attachment of proline to tRNA(Pro) in a two-step reaction: proline is first activated by ATP to form Pro-AMP and then transferred to the acceptor end of tRNA(Pro). As ProRS can inadvertently accommodate and process non-cognate amino acids such as alanine and cysteine, to avoid such errors it has two additional distinct editing activities against alanine. One activity is designated as 'pretransfer' editing and involves the tRNA(Pro)-independent hydrolysis of activated Ala-AMP. The other activity is designated 'posttransfer' editing and involves deacylation of mischarged Ala-tRNA(Pro). The misacylated Cys-tRNA(Pro) is not edited by ProRS. The chain is Proline--tRNA ligase from Helicobacter pylori (strain P12).